Here is a 326-residue protein sequence, read N- to C-terminus: Eukaryotic translation initiation factor 3 subunit I (326 aa).

WD repeat units lie at residues 8–47 (GHERSITQIKYNREGDLLFSCSKDQKPNVWYSLNGERLGT), 50–89 (GHQGAVWCLDVDWESRKLITGAGDMTAKIWDVEYGTVIAS), 145–184 (MTESKITSMLWGPLDETIITGHDNGNIAIWDIRKGQKVVD), 188–227 (DHSAGINDMQLSKDGTMFVTASKDTTAKLFDSESLMCLKT), and 285–326 (GHFG…NIFE).

The protein belongs to the eIF-3 subunit I family. In terms of assembly, component of the eukaryotic translation initiation factor 3 (eIF-3) complex. The eIF-3 complex interacts with pix.

Its subcellular location is the cytoplasm. Its function is as follows. Component of the eukaryotic translation initiation factor 3 (eIF-3) complex, which is involved in protein synthesis of a specialized repertoire of mRNAs and, together with other initiation factors, stimulates binding of mRNA and methionyl-tRNAi to the 40S ribosome. The eIF-3 complex specifically targets and initiates translation of a subset of mRNAs involved in cell proliferation. The polypeptide is Eukaryotic translation initiation factor 3 subunit I (Drosophila sechellia (Fruit fly)).